A 130-amino-acid polypeptide reads, in one-letter code: Small ribosomal subunit protein uS9 (130 aa).

It belongs to the universal ribosomal protein uS9 family.

The protein is Small ribosomal subunit protein uS9 of Vibrio campbellii (strain ATCC BAA-1116).